We begin with the raw amino-acid sequence, 284 residues long: MLIAAMGPKIPVPAYGVGTALFKKEKGEINRTIVDSVKNALAAGFIHIDCAEVYGNEEEVGVALKEANVPRSKLFITSKVMHNVDNIPEALNESLRKLGTDYLDLYLLHSPIPFYEKKIPISEGWKAMETALGTGLVHSVGVSNFRIPDLEELLKTSTITPRVNQIEFHPQVYKAAKPLVEFCQSKGIIVEGYGPLSPLVRDAQGPVAEFTKSLESKYHVSDTQILLKWAYSKGVIPITTTSKIERMKECLNFDSFTLDKADIDELGTLGVQHHKRTFMKHMDE.

Asp49 lines the NADPH pocket. Residues Tyr54 and His109 each act as proton donor in the active site. NADPH is bound by residues Ser143, Gln165, Leu196, Arg201, Thr239, Thr240, Thr241, Ser242, Lys243, and Arg246.

This sequence belongs to the aldo/keto reductase family. In terms of assembly, monomer.

The protein localises to the cytoplasm. It localises to the nucleus. The enzyme catalyses indole-3-ethanol + NAD(+) = indole-3-acetaldehyde + NADH + H(+). It catalyses the reaction indole-3-ethanol + NADP(+) = indole-3-acetaldehyde + NADPH + H(+). This Schizosaccharomyces pombe (strain 972 / ATCC 24843) (Fission yeast) protein is NAD/NADP-dependent indole-3-acetaldehyde reductase.